The primary structure comprises 613 residues: Serine/threonine-protein kinase pkpA (613 aa).

The region spanning 17–269 (SKLNTVLGKG…AQEILEHRFL (253 aa)) is the Protein kinase domain. ATP is bound by residues 23–31 (LGKGAYKVV) and Lys-50. The Proton acceptor role is filled by Asp-140. Disordered regions lie at residues 424–475 (LQPQ…STML) and 589–613 (VTQRGLQGTRSGASTPVEEQEQELM). Positions 427 to 441 (QPQPQPQPQPQPQPQ) are enriched in pro residues. Low complexity predominate over residues 442-475 (PQFQLQPQLQYLSPQSTTSPGPTSDDNSTNSTML). Polar residues predominate over residues 592–602 (RGLQGTRSGAS).

The protein belongs to the protein kinase superfamily. Ser/Thr protein kinase family.

It catalyses the reaction L-seryl-[protein] + ATP = O-phospho-L-seryl-[protein] + ADP + H(+). The catalysed reaction is L-threonyl-[protein] + ATP = O-phospho-L-threonyl-[protein] + ADP + H(+). Its function is as follows. Serine/threonine protein kinase that probably participates as an intermediate in an intracellular system controlling nuclear proliferation. This chain is Serine/threonine-protein kinase pkpA (pkpA), found in Phycomyces blakesleeanus (strain ATCC 8743b / DSM 1359 / FGSC 10004 / NBRC 33097 / NRRL 1555).